The primary structure comprises 127 residues: Large ribosomal subunit protein bL20 (127 aa).

This sequence belongs to the bacterial ribosomal protein bL20 family.

Binds directly to 23S ribosomal RNA and is necessary for the in vitro assembly process of the 50S ribosomal subunit. It is not involved in the protein synthesizing functions of that subunit. This is Large ribosomal subunit protein bL20 (rplT) from Mycoplasma pneumoniae (strain ATCC 29342 / M129 / Subtype 1) (Mycoplasmoides pneumoniae).